Consider the following 147-residue polypeptide: Large ribosomal subunit protein uL22 (147 aa).

It belongs to the universal ribosomal protein uL22 family. Part of the 50S ribosomal subunit.

Functionally, this protein binds specifically to 23S rRNA; its binding is stimulated by other ribosomal proteins, e.g. L4, L17, and L20. It is important during the early stages of 50S assembly. It makes multiple contacts with different domains of the 23S rRNA in the assembled 50S subunit and ribosome. Its function is as follows. The globular domain of the protein is located near the polypeptide exit tunnel on the outside of the subunit, while an extended beta-hairpin is found that lines the wall of the exit tunnel in the center of the 70S ribosome. In Fervidobacterium nodosum (strain ATCC 35602 / DSM 5306 / Rt17-B1), this protein is Large ribosomal subunit protein uL22.